Consider the following 364-residue polypeptide: 4-hydroxythreonine-4-phosphate dehydrogenase (364 aa).

Residues His-148 and Thr-149 each contribute to the substrate site. The a divalent metal cation site is built by His-177, His-216, and His-301. Residues Lys-309, Asn-318, and Arg-327 each coordinate substrate.

Belongs to the PdxA family. As to quaternary structure, homodimer. It depends on Zn(2+) as a cofactor. Mg(2+) serves as cofactor. Requires Co(2+) as cofactor.

It is found in the cytoplasm. It catalyses the reaction 4-(phosphooxy)-L-threonine + NAD(+) = 3-amino-2-oxopropyl phosphate + CO2 + NADH. The protein operates within cofactor biosynthesis; pyridoxine 5'-phosphate biosynthesis; pyridoxine 5'-phosphate from D-erythrose 4-phosphate: step 4/5. Its function is as follows. Catalyzes the NAD(P)-dependent oxidation of 4-(phosphooxy)-L-threonine (HTP) into 2-amino-3-oxo-4-(phosphooxy)butyric acid which spontaneously decarboxylates to form 3-amino-2-oxopropyl phosphate (AHAP). This is 4-hydroxythreonine-4-phosphate dehydrogenase from Campylobacter jejuni subsp. jejuni serotype O:23/36 (strain 81-176).